The following is a 98-amino-acid chain: MHGRHVTLKDIVLDLQPPDPVGLHCYEQLVDSSEDEVDEVDGQDSQPLKQHFQIVTCCCGCDSNVRLVVQCTETDIREVQQLLLGTLDIVCPICAPKT.

Residues 1 to 42 form an E7 terminal domain region; sequence MHGRHVTLKDIVLDLQPPDPVGLHCYEQLVDSSEDEVDEVDG. Residues 23–27 carry the LXCXE motif; interaction with host RB1 and TMEM173/STING motif; that stretch reads LHCYE. A zinc finger spans residues 58 to 94; the sequence is CCGCDSNVRLVVQCTETDIREVQQLLLGTLDIVCPIC. Residues 76-84 carry the Nuclear export signal motif; the sequence is IREVQQLLL.

This sequence belongs to the papillomaviridae E7 protein family. Homodimer. Homooligomer. Interacts with host RB1; this interaction induces dissociation of RB1-E2F1 complex thereby disrupting RB1 activity. Interacts with host EP300; this interaction represses EP300 transcriptional activity. Interacts with protein E2; this interaction inhibits E7 oncogenic activity. Interacts with host TMEM173/STING; this interaction impairs the ability of TMEM173/STING to sense cytosolic DNA and promote the production of type I interferon (IFN-alpha and IFN-beta). Highly phosphorylated.

The protein resides in the host cytoplasm. It is found in the host nucleus. Plays a role in viral genome replication by driving entry of quiescent cells into the cell cycle. Stimulation of progression from G1 to S phase allows the virus to efficiently use the cellular DNA replicating machinery to achieve viral genome replication. E7 protein has both transforming and trans-activating activities. Induces the disassembly of the E2F1 transcription factor from RB1, with subsequent transcriptional activation of E2F1-regulated S-phase genes. Interferes with host histone deacetylation mediated by HDAC1 and HDAC2, leading to transcription activation. Also plays a role in the inhibition of both antiviral and antiproliferative functions of host interferon alpha. Interaction with host TMEM173/STING impairs the ability of TMEM173/STING to sense cytosolic DNA and promote the production of type I interferon (IFN-alpha and IFN-beta). The protein is Protein E7 of Homo sapiens (Human).